The following is a 365-amino-acid chain: Sulfate/thiosulfate import ATP-binding protein CysA (365 aa).

Residues 3–237 (IEIANIKKSF…PATRFVLEFM (235 aa)) enclose the ABC transporter domain. 35-42 (GPSGSGKT) lines the ATP pocket.

The protein belongs to the ABC transporter superfamily. Sulfate/tungstate importer (TC 3.A.1.6) family. The complex is composed of two ATP-binding proteins (CysA), two transmembrane proteins (CysT and CysW) and a solute-binding protein (CysP).

The protein localises to the cell inner membrane. It carries out the reaction sulfate(out) + ATP + H2O = sulfate(in) + ADP + phosphate + H(+). The catalysed reaction is thiosulfate(out) + ATP + H2O = thiosulfate(in) + ADP + phosphate + H(+). Part of the ABC transporter complex CysAWTP involved in sulfate/thiosulfate import. Responsible for energy coupling to the transport system. This Shigella flexneri protein is Sulfate/thiosulfate import ATP-binding protein CysA.